Reading from the N-terminus, the 265-residue chain is Sarcotoxin II-1 (265 aa).

A signal peptide spans 1–22; the sequence is MKSFVLFAACMAIIALGSLAHA. Positions 23–24 are cleaved as a propeptide — removed by a dipeptidylpeptidase; the sequence is YP. The residue at position 25 (Gln-25) is a Pyrrolidone carboxylic acid. At Gly-264 the chain carries Glycine amide.

The protein belongs to the attacin/sarcotoxin-2 family. As to expression, synthesized by the fat body and is eventually secreted into the hemolymph.

The protein localises to the secreted. Its function is as follows. Sarcotoxin II is an antibacterial protein which plays a role in the inflammatory response of this insect. The main effect of sarcotoxin II on E.coli may be the inhibition of cell wall synthesis, including septum formation. The protein is Sarcotoxin II-1 of Sarcophaga peregrina (Flesh fly).